The chain runs to 384 residues: Cytochrome b (384 aa).

4 consecutive transmembrane segments (helical) span residues 32–52 (FGSL…FLSM), 75–96 (FLLR…YFHI), 111–131 (WRVG…GYVL), and 176–196 (FFSL…VHLI). Heme b contacts are provided by His-81 and His-95. Residues His-180 and His-194 each coordinate heme b. His-199 contacts a ubiquinone. A run of 4 helical transmembrane segments spans residues 224-244 (SKDW…VYLM), 286-306 (FGGV…PLLH), 318-338 (FGRM…WIGS), and 345-366 (FIII…LIPL).

Belongs to the cytochrome b family. As to quaternary structure, the main subunits of complex b-c1 are: cytochrome b, cytochrome c1 and the Rieske protein. Heme b is required as a cofactor.

The protein localises to the mitochondrion inner membrane. Its function is as follows. Component of the ubiquinol-cytochrome c reductase complex (complex III or cytochrome b-c1 complex) that is part of the mitochondrial respiratory chain. The b-c1 complex mediates electron transfer from ubiquinol to cytochrome c. Contributes to the generation of a proton gradient across the mitochondrial membrane that is then used for ATP synthesis. In Acropora tenuis (Purple tipped acropora), this protein is Cytochrome b (MT-CYB).